The following is a 386-amino-acid chain: Acyl-[acyl-carrier-protein] dehydrogenase MbtN (386 aa).

Belongs to the acyl-CoA dehydrogenase family. FAD serves as cofactor.

It functions in the pathway siderophore biosynthesis; mycobactin biosynthesis. Catalyzes the dehydrogenation at the alpha-beta position of ACP-bound acyl chains. This results in the introduction of a double bond in the lipidic chain, which is further transferred to the epsilon-amino group of lysine residue in the mycobactin core by MbtK. The sequence is that of Acyl-[acyl-carrier-protein] dehydrogenase MbtN (mbtN) from Mycobacterium bovis (strain ATCC BAA-935 / AF2122/97).